We begin with the raw amino-acid sequence, 459 residues long: Bifunctional protein GlmU (459 aa).

The pyrophosphorylase stretch occupies residues 1 to 229 (MSNFAIILAA…FDESLGVNDR (229 aa)). UDP-N-acetyl-alpha-D-glucosamine contacts are provided by residues 8–11 (LAAG), Lys-22, Gln-72, and 77–78 (GT). Asp-102 contributes to the Mg(2+) binding site. Residues Gly-139, Glu-154, Asn-169, and Asn-227 each contribute to the UDP-N-acetyl-alpha-D-glucosamine site. Residue Asn-227 participates in Mg(2+) binding. Residues 230 to 250 (VALATAESVMRRRINHKHMVN) are linker. Residues 251 to 459 (GVSFVNPEAT…TRLPHHPKNQ (209 aa)) form an N-acetyltransferase region. UDP-N-acetyl-alpha-D-glucosamine contacts are provided by Arg-332 and Lys-350. Catalysis depends on His-362, which acts as the Proton acceptor. 2 residues coordinate UDP-N-acetyl-alpha-D-glucosamine: Tyr-365 and Asn-376. Acetyl-CoA contacts are provided by residues Ala-379, 385 to 386 (NY), Ser-404, Ala-422, and Arg-439.

In the N-terminal section; belongs to the N-acetylglucosamine-1-phosphate uridyltransferase family. It in the C-terminal section; belongs to the transferase hexapeptide repeat family. As to quaternary structure, homotrimer. Mg(2+) serves as cofactor.

The protein resides in the cytoplasm. The enzyme catalyses alpha-D-glucosamine 1-phosphate + acetyl-CoA = N-acetyl-alpha-D-glucosamine 1-phosphate + CoA + H(+). The catalysed reaction is N-acetyl-alpha-D-glucosamine 1-phosphate + UTP + H(+) = UDP-N-acetyl-alpha-D-glucosamine + diphosphate. It participates in nucleotide-sugar biosynthesis; UDP-N-acetyl-alpha-D-glucosamine biosynthesis; N-acetyl-alpha-D-glucosamine 1-phosphate from alpha-D-glucosamine 6-phosphate (route II): step 2/2. Its pathway is nucleotide-sugar biosynthesis; UDP-N-acetyl-alpha-D-glucosamine biosynthesis; UDP-N-acetyl-alpha-D-glucosamine from N-acetyl-alpha-D-glucosamine 1-phosphate: step 1/1. It functions in the pathway bacterial outer membrane biogenesis; LPS lipid A biosynthesis. Catalyzes the last two sequential reactions in the de novo biosynthetic pathway for UDP-N-acetylglucosamine (UDP-GlcNAc). The C-terminal domain catalyzes the transfer of acetyl group from acetyl coenzyme A to glucosamine-1-phosphate (GlcN-1-P) to produce N-acetylglucosamine-1-phosphate (GlcNAc-1-P), which is converted into UDP-GlcNAc by the transfer of uridine 5-monophosphate (from uridine 5-triphosphate), a reaction catalyzed by the N-terminal domain. The sequence is that of Bifunctional protein GlmU from Streptococcus pneumoniae serotype 2 (strain D39 / NCTC 7466).